We begin with the raw amino-acid sequence, 523 residues long: Pentatricopeptide repeat-containing protein At3g21470 (523 aa).

13 PPR repeats span residues 10-43 (GEFH…RGVY), 44-79 (FPGW…GVCS), 80-114 (DVMV…NVAT), 115-141 (WNAM…ISVC), 143-173 (NTVT…MPFE), 176-210 (NVKA…NAFV), 211-237 (WSLM…VFAR), 238-272 (DLVI…GYEP), 273-307 (DAVT…GIEL), 308-338 (NQFV…ISVR), 339-373 (SVAC…DLKP), 374-408 (DEIT…DVKP), and 409-439 (NVKH…MHVK). The type E motif stretch occupies residues 444-523 (VLGALLGACK…SPGLSSLVLT (80 aa)).

Belongs to the PPR family. PCMP-E subfamily.

The sequence is that of Pentatricopeptide repeat-containing protein At3g21470 (PCMP-E29) from Arabidopsis thaliana (Mouse-ear cress).